The primary structure comprises 214 residues: Pyridoxine/pyridoxamine 5'-phosphate oxidase (214 aa).

Residues 9 to 12 and lysine 67 contribute to the substrate site; that span reads RLDY. FMN contacts are provided by residues 62-67, 77-78, lysine 84, and glutamine 106; these read RMVLLK and FT. Positions 124, 128, and 132 each coordinate substrate. Residues 141 to 142 and tryptophan 186 each bind FMN; that span reads QS. 192–194 is a binding site for substrate; that stretch reads RLH. Arginine 196 serves as a coordination point for FMN.

Belongs to the pyridoxamine 5'-phosphate oxidase family. In terms of assembly, homodimer. Requires FMN as cofactor.

It carries out the reaction pyridoxamine 5'-phosphate + O2 + H2O = pyridoxal 5'-phosphate + H2O2 + NH4(+). The catalysed reaction is pyridoxine 5'-phosphate + O2 = pyridoxal 5'-phosphate + H2O2. It participates in cofactor metabolism; pyridoxal 5'-phosphate salvage; pyridoxal 5'-phosphate from pyridoxamine 5'-phosphate: step 1/1. The protein operates within cofactor metabolism; pyridoxal 5'-phosphate salvage; pyridoxal 5'-phosphate from pyridoxine 5'-phosphate: step 1/1. Functionally, catalyzes the oxidation of either pyridoxine 5'-phosphate (PNP) or pyridoxamine 5'-phosphate (PMP) into pyridoxal 5'-phosphate (PLP). This Microcystis aeruginosa (strain NIES-843 / IAM M-2473) protein is Pyridoxine/pyridoxamine 5'-phosphate oxidase.